Reading from the N-terminus, the 450-residue chain is Sorting nexin-4 (450 aa).

Methionine 1 bears the N-acetylmethionine mark. A disordered region spans residues 1-46 (MEQAPPDPEKLLQPGPLEPLGGPGAVLEAAVGEENEGTREDGSGVD). A compositionally biased stretch (low complexity) spans 11-20 (LLQPGPLEPL). The PX domain occupies 61 to 187 (SVSEAEKRTG…YSFLTQEGNW (127 aa)). A 1,2-diacyl-sn-glycero-3-phospho-(1D-myo-inositol-3-phosphate) is bound by residues arginine 106, serine 108, lysine 132, and arginine 154.

It belongs to the sorting nexin family. Heterodimer; heterodimerizes with SNX7 or SNX30. Interacts with WWC1/KIBRA. Identified in a complex with WWC1/KIBRA and dynein components DYNLL1 and DYNC1I2. Interacts with BIN1.

The protein resides in the early endosome. It is found in the early endosome membrane. Involved in the regulation of endocytosis and in several stages of intracellular trafficking. Plays a role in recycling endocytosed transferrin receptor and prevent its degradation. Involved in autophagosome assembly by regulating trafficking and recycling of phospholipid scramblase ATG9A. In Mus musculus (Mouse), this protein is Sorting nexin-4.